Here is a 431-residue protein sequence, read N- to C-terminus: Serine hydroxymethyltransferase (431 aa).

122–124 (GHI) contacts (6S)-5,6,7,8-tetrahydrofolate. K228 bears the N6-(pyridoxal phosphate)lysine mark. A (6S)-5,6,7,8-tetrahydrofolate-binding site is contributed by E245.

The protein belongs to the SHMT family. In terms of assembly, homodimer. Requires pyridoxal 5'-phosphate as cofactor.

The protein localises to the cytoplasm. The protein operates within amino-acid biosynthesis; glycine biosynthesis; glycine from L-serine: step 1/1. Its function is as follows. Catalyzes the reversible interconversion of serine and glycine with a modified folate serving as the one-carbon carrier. Also exhibits a pteridine-independent aldolase activity toward beta-hydroxyamino acids, producing glycine and aldehydes, via a retro-aldol mechanism. The polypeptide is Serine hydroxymethyltransferase (Thermococcus kodakarensis (strain ATCC BAA-918 / JCM 12380 / KOD1) (Pyrococcus kodakaraensis (strain KOD1))).